The chain runs to 231 residues: Flagellar L-ring protein (231 aa).

Positions 1 to 18 (MNRLLSLFALGGAVLLAG) are cleaved as a signal peptide. Cysteine 19 carries N-palmitoyl cysteine lipidation. Cysteine 19 carries the S-diacylglycerol cysteine lipid modification.

The protein belongs to the FlgH family. The basal body constitutes a major portion of the flagellar organelle and consists of four rings (L,P,S, and M) mounted on a central rod.

It is found in the cell outer membrane. Its subcellular location is the bacterial flagellum basal body. Assembles around the rod to form the L-ring and probably protects the motor/basal body from shearing forces during rotation. This chain is Flagellar L-ring protein, found in Pseudomonas putida (strain W619).